The primary structure comprises 515 residues: Fatty acyl-CoA reductase 2 (515 aa).

At 1-465 (MSMIAAFYGG…AKQHLKRLRN (465 aa)) the chain is on the cytoplasmic side. A helical membrane pass occupies residues 466 to 484 (IHYLFNTALFLIAWRLLIA). Residues 485-515 (RSQVARNVWFFIVSFCYKFLSYFRASSTLNV) are Peroxisomal-facing.

Belongs to the fatty acyl-CoA reductase family.

Its subcellular location is the peroxisome membrane. The catalysed reaction is a long-chain fatty acyl-CoA + 2 NADPH + 2 H(+) = a long-chain primary fatty alcohol + 2 NADP(+) + CoA. The enzyme catalyses hexadecanoyl-CoA + 2 NADPH + 2 H(+) = hexadecan-1-ol + 2 NADP(+) + CoA. It carries out the reaction octadecanoyl-CoA + 2 NADPH + 2 H(+) = octadecan-1-ol + 2 NADP(+) + CoA. It catalyses the reaction a very long-chain fatty acyl-CoA + 2 NADPH + 2 H(+) = a very long-chain primary fatty alcohol + 2 NADP(+) + CoA. The catalysed reaction is an ultra-long-chain fatty acyl-CoA + 2 NADPH + 2 H(+) = an ultra long-chain primary fatty alcohol + 2 NADP(+) + CoA. The enzyme catalyses eicosanoyl-CoA + 2 NADPH + 2 H(+) = eicosan-1-ol + 2 NADP(+) + CoA. It carries out the reaction docosanoyl-CoA + 2 NADPH + 2 H(+) = docosan-1-ol + 2 NADP(+) + CoA. It catalyses the reaction tetracosanoyl-CoA + 2 NADPH + 2 H(+) = tetracosan-1-ol + 2 NADP(+) + CoA. The catalysed reaction is hexacosanoyl-CoA + 2 NADPH + 2 H(+) = hexacosan-1-ol + 2 NADP(+) + CoA. The enzyme catalyses octacosanoyl-CoA + 2 NADPH + 2 H(+) = octacosan-1-ol + 2 NADP(+) + CoA. It carries out the reaction triacontanoyl-CoA + 2 NADPH + 2 H(+) = triacontan-1-ol + 2 NADP(+) + CoA. It catalyses the reaction 18-methylnonadecanoyl-CoA + 2 NADPH + 2 H(+) = 18-methylnonadecan-1-ol + 2 NADP(+) + CoA. The catalysed reaction is 20-methylheneicosanoyl-CoA + 2 NADPH + 2 H(+) = 20-methylheneicosan-1-ol + 2 NADP(+) + CoA. The enzyme catalyses 22-methyltricosanoyl-CoA + 2 NADPH + 2 H(+) = 22-methyltricosan-1-ol + 2 NADP(+) + CoA. It carries out the reaction 24-methylpentacosanoyl-CoA + 2 NADPH + 2 H(+) = 24-methylpentacosan-1-ol + 2 NADP(+) + CoA. Functionally, catalyzes the reduction of saturated but not unsaturated C16 or C18 fatty acyl-CoA to fatty alcohols (FAls). A lower activity can be observed with shorter fatty acyl-CoA substrates. Can produce very long-chain and ultra long-chain FAls, regardless of whether they have a straight or branched chain. Involved in the production of ether lipids/plasmalogens and wax monoesters whose synthesis requires FAls as substrates. The sequence is that of Fatty acyl-CoA reductase 2 from Bos taurus (Bovine).